Reading from the N-terminus, the 531-residue chain is Probable bifunctional methylthioribulose-1-phosphate dehydratase/enolase-phosphatase E1 2 (531 aa).

The segment at 1–248 is methylthioribulose-1-phosphate dehydratase; sequence MGVPSEGAVG…AIKLHQLGLD (248 aa). Cys120 is a substrate binding site. 2 residues coordinate Zn(2+): His138 and His140. Catalysis depends on Glu163, which acts as the Proton donor/acceptor; for methylthioribulose-1-phosphate dehydratase activity. His213 serves as a coordination point for Zn(2+). Residues 292–531 form an enolase-phosphatase E1 region; the sequence is ILLDIEGTTT…FRTIETFLEI (240 aa). Residues Asp295 and Glu297 each contribute to the Mg(2+) site. Substrate is bound by residues 430 to 431 and Lys464; that span reads SS. Asp490 contributes to the Mg(2+) binding site.

The protein in the N-terminal section; belongs to the aldolase class II family. MtnB subfamily. This sequence in the C-terminal section; belongs to the HAD-like hydrolase superfamily. MasA/MtnC family. Zn(2+) is required as a cofactor. Requires Mg(2+) as cofactor.

The catalysed reaction is 5-(methylsulfanyl)-D-ribulose 1-phosphate = 5-methylsulfanyl-2,3-dioxopentyl phosphate + H2O. It catalyses the reaction 5-methylsulfanyl-2,3-dioxopentyl phosphate + H2O = 1,2-dihydroxy-5-(methylsulfanyl)pent-1-en-3-one + phosphate. It functions in the pathway amino-acid biosynthesis; L-methionine biosynthesis via salvage pathway; L-methionine from S-methyl-5-thio-alpha-D-ribose 1-phosphate: step 2/6. The protein operates within amino-acid biosynthesis; L-methionine biosynthesis via salvage pathway; L-methionine from S-methyl-5-thio-alpha-D-ribose 1-phosphate: step 3/6. It participates in amino-acid biosynthesis; L-methionine biosynthesis via salvage pathway; L-methionine from S-methyl-5-thio-alpha-D-ribose 1-phosphate: step 4/6. This Vitis vinifera (Grape) protein is Probable bifunctional methylthioribulose-1-phosphate dehydratase/enolase-phosphatase E1 2.